The following is a 300-amino-acid chain: 7-methylguanosine phosphate-specific 5'-nucleotidase (300 aa).

Aspartate 41 (nucleophile) is an active-site residue. Mg(2+)-binding residues include aspartate 41 and aspartate 43. Aspartate 43 acts as the Proton donor in catalysis. CMP is bound at residue glutamate 88. Glutamate 88 contacts N(7)-methyl-GMP. Substrate-binding positions include 156–157 (SA) and lysine 205. Aspartate 230 is a binding site for Mg(2+). N6-acetyllysine is present on lysine 256.

The protein belongs to the pyrimidine 5'-nucleotidase family. As to quaternary structure, monomer.

The protein resides in the cytoplasm. The catalysed reaction is N(7)-methyl-GMP + H2O = N(7)-methylguanosine + phosphate. The enzyme catalyses CMP + H2O = cytidine + phosphate. It catalyses the reaction a ribonucleoside 5'-phosphate + H2O = a ribonucleoside + phosphate. Its function is as follows. Specifically hydrolyzes 7-methylguanosine monophosphate (m(7)GMP) to 7-methylguanosine and inorganic phosphate. The specific activity for m(7)GMP may protect cells against undesired salvage of m(7)GMP and its incorporation into nucleic acids. Also has weak activity for CMP. UMP and purine nucleotides are poor substrates. The sequence is that of 7-methylguanosine phosphate-specific 5'-nucleotidase (Nt5c3b) from Rattus norvegicus (Rat).